Consider the following 356-residue polypeptide: Phosphoribosyl pyrophosphate synthase-associated protein 1 (356 aa).

N-acetylmethionine is present on Met1. Ser177 and Ser215 each carry phosphoserine.

It belongs to the ribose-phosphate pyrophosphokinase family. In terms of assembly, binds to PRPS1 and PRPS2.

Seems to play a negative regulatory role in 5-phosphoribose 1-diphosphate synthesis. The sequence is that of Phosphoribosyl pyrophosphate synthase-associated protein 1 (PRPSAP1) from Bos taurus (Bovine).